Here is an 831-residue protein sequence, read N- to C-terminus: Probable beta-glucosidase H (831 aa).

Asn-13 carries N-linked (GlcNAc...) asparagine glycosylation. Asp-225 is a catalytic residue. The region spanning 389–549 (RLLSNAVIHF…DAEEMINRAV (161 aa)) is the PA14 domain. 6 N-linked (GlcNAc...) asparagine glycosylation sites follow: Asn-474, Asn-514, Asn-604, Asn-629, Asn-726, and Asn-823.

Belongs to the glycosyl hydrolase 3 family.

The protein localises to the secreted. It catalyses the reaction Hydrolysis of terminal, non-reducing beta-D-glucosyl residues with release of beta-D-glucose.. It functions in the pathway glycan metabolism; cellulose degradation. Beta-glucosidases are one of a number of cellulolytic enzymes involved in the degradation of cellulosic biomass. Catalyzes the last step releasing glucose from the inhibitory cellobiose. In Emericella nidulans (strain FGSC A4 / ATCC 38163 / CBS 112.46 / NRRL 194 / M139) (Aspergillus nidulans), this protein is Probable beta-glucosidase H (bglH).